Reading from the N-terminus, the 327-residue chain is Serine/threonine-protein phosphatase alpha-1 isoform (327 aa).

Residues D62, H64, D90, and N122 each contribute to the Mn(2+) site. The active-site Proton donor is H123. Mn(2+)-binding residues include H171 and H246. A disordered region spans residues 308 to 327 (GSSGRPLTPPRGANNKNKKK). The residue at position 315 (T315) is a Phosphothreonine.

Belongs to the PPP phosphatase family. PP-1 subfamily. In terms of assembly, interacts with Nop17l. Requires Mn(2+) as cofactor.

The enzyme catalyses O-phospho-L-seryl-[protein] + H2O = L-seryl-[protein] + phosphate. It carries out the reaction O-phospho-L-threonyl-[protein] + H2O = L-threonyl-[protein] + phosphate. The sequence is that of Serine/threonine-protein phosphatase alpha-1 isoform (Pp1alpha-96A) from Drosophila melanogaster (Fruit fly).